Reading from the N-terminus, the 139-residue chain is Crossover junction endodeoxyribonuclease Hje (139 aa).

Residues E10, D39, and E52 each contribute to the Mg(2+) site.

The protein belongs to the Holliday junction resolvase Hjc family. Hje subfamily. As to quaternary structure, homodimer. It depends on Mg(2+) as a cofactor.

The catalysed reaction is Endonucleolytic cleavage at a junction such as a reciprocal single-stranded crossover between two homologous DNA duplexes (Holliday junction).. Its function is as follows. A structure-specific endonuclease that resolves Holliday junction (HJ) intermediates during genetic recombination. Acts only on 4-way DNA junctions in a sequence non-specific manner; introduces paired nicks in opposing strands 2 bases 3' of the point of strand exchange only on continuous strands of 4-way junction DNA. Cleaves both mobile and immobile junctions. Functionally, redundant function with Holliday junction resolvase Hjc. This Sulfolobus acidocaldarius (strain ATCC 33909 / DSM 639 / JCM 8929 / NBRC 15157 / NCIMB 11770) protein is Crossover junction endodeoxyribonuclease Hje.